Reading from the N-terminus, the 339-residue chain is Heat-inducible transcription repressor HrcA (339 aa).

This sequence belongs to the HrcA family.

Its function is as follows. Negative regulator of class I heat shock genes (grpE-dnaK-dnaJ and groELS operons). Prevents heat-shock induction of these operons. The chain is Heat-inducible transcription repressor HrcA from Acidothermus cellulolyticus (strain ATCC 43068 / DSM 8971 / 11B).